The chain runs to 160 residues: Globin CTT-II beta (160 aa).

The signal sequence occupies residues 1-15; it reads MKFLVLALCIAAAVA. The Globin domain occupies 17–160; sequence PLSADEASLV…NVFNMMFSYL (144 aa). Residues H75 and H110 each contribute to the heme b site.

Belongs to the globin family. Homodimer.

This Chironomus thummi thummi (Midge) protein is Globin CTT-II beta.